A 222-amino-acid chain; its full sequence is MESTLELTKIKEVLQKNLKILIILPLLFLIISAIVTFFVLSPKYQANTQILVNQTKGDNPQFMAQEVQSNIQLVNTYKEIVKSPRILDEVSKDLNDKYSPSKLSSMLTITNQENTQLINIQVKSGHKQDSEKIANSFAKVTSKQIPKIMSVDNVSILSKADGTAVKVAPKTVVNLIGAFFLGLVVALIYIFFKVIFDKRIKDEEDVEKELGLPVLGSIQKFN.

2 consecutive transmembrane segments (helical) span residues 20–40 (ILII…FFVL) and 172–192 (VVNL…YIFF).

The protein belongs to the CpsC/CapA family.

Its subcellular location is the cell membrane. Its function is as follows. Required for the biosynthesis of type 5 capsular polysaccharide (Cap5/CP5). Might act as the chain-length regulator. This Staphylococcus aureus (strain Newman) protein is Capsular polysaccharide type 5 biosynthesis protein cap5A (cap5A).